The primary structure comprises 222 residues: N-acetyltransferase 8F1 (222 aa).

The chain crosses the membrane as a helical span at residues leucine 53–leucine 73. One can recognise an N-acetyltransferase domain in the interval phenylalanine 69 to proline 220.

Belongs to the camello family.

The protein resides in the membrane. May play a role in regulation of gastrulation. This chain is N-acetyltransferase 8F1, found in Mus musculus (Mouse).